The primary structure comprises 311 residues: Aspartate carbamoyltransferase catalytic subunit (311 aa).

Carbamoyl phosphate contacts are provided by R55 and T56. K85 contributes to the L-aspartate binding site. The carbamoyl phosphate site is built by R106, H135, and Q138. Positions 168 and 230 each coordinate L-aspartate. Residues L268 and P269 each contribute to the carbamoyl phosphate site.

Belongs to the aspartate/ornithine carbamoyltransferase superfamily. ATCase family. Heterododecamer (2C3:3R2) of six catalytic PyrB chains organized as two trimers (C3), and six regulatory PyrI chains organized as three dimers (R2).

It carries out the reaction carbamoyl phosphate + L-aspartate = N-carbamoyl-L-aspartate + phosphate + H(+). The protein operates within pyrimidine metabolism; UMP biosynthesis via de novo pathway; (S)-dihydroorotate from bicarbonate: step 2/3. Its function is as follows. Catalyzes the condensation of carbamoyl phosphate and aspartate to form carbamoyl aspartate and inorganic phosphate, the committed step in the de novo pyrimidine nucleotide biosynthesis pathway. The chain is Aspartate carbamoyltransferase catalytic subunit from Salmonella dublin (strain CT_02021853).